Consider the following 175-residue polypeptide: Mitochondrial inner membrane protease subunit 2 (175 aa).

A helical transmembrane segment spans residues 19–37; it reads FFVAVPVAVTFLDRVACVA. Residues Ser43 and Lys91 contribute to the active site.

It belongs to the peptidase S26 family. IMP2 subfamily. In terms of assembly, heterodimer of 2 subunits, IMMPL1 and IMMPL2.

It is found in the mitochondrion inner membrane. Catalyzes the removal of transit peptides required for the targeting of proteins from the mitochondrial matrix, across the inner membrane, into the inter-membrane space. Known to process the nuclear encoded protein DIABLO. The chain is Mitochondrial inner membrane protease subunit 2 (Immp2l) from Mus musculus (Mouse).